Consider the following 200-residue polypeptide: Sorting nexin-10 (200 aa).

The interval 8–125 (EEFVSVWVRD…SLHLFLQSHL (118 aa)) is required for interaction with ATP6V1D. Residues 10–127 (FVSVWVRDPR…HLFLQSHLNS (118 aa)) enclose the PX domain. Arginine 53, lysine 79, and arginine 94 together coordinate a 1,2-diacyl-sn-glycero-3-phospho-(1D-myo-inositol-3-phosphate). Basic and acidic residues predominate over residues 156 to 167 (FPEEEEGKKEND). The interval 156-200 (FPEEEEGKKENDIDYDSESSSSGFGHSSDDSSSHGCKMSTAPQES) is disordered.

It belongs to the sorting nexin family. In terms of assembly, interacts with ATP6V1D; may play a role in ciliogenesis.

The protein localises to the cytoplasm. It is found in the endosome membrane. Its subcellular location is the cytoskeleton. The protein resides in the microtubule organizing center. It localises to the centrosome. Probable phosphoinositide-binding protein involved in protein sorting and membrane trafficking in endosomes. Plays a role in cilium biogenesis through regulation of the transport and the localization of proteins to the cilium. Required for the localization to the cilium of V-ATPase subunit ATP6V1D and ATP6V0D1, and RAB8A. Involved in osteoclast differentiation and therefore bone resorption. In Bos taurus (Bovine), this protein is Sorting nexin-10 (SNX10).